A 422-amino-acid polypeptide reads, in one-letter code: L-2-hydroxyglutarate dehydrogenase (422 aa).

Belongs to the L2HGDH family. Requires FAD as cofactor.

Its subcellular location is the cell inner membrane. The catalysed reaction is (S)-2-hydroxyglutarate + a quinone = a quinol + 2-oxoglutarate. Its pathway is amino-acid degradation. Catalyzes the dehydrogenation of L-2-hydroxyglutarate (L2HG) to alpha-ketoglutarate and couples to the respiratory chain by feeding electrons from the reaction into the membrane quinone pool. Functions in a L-lysine degradation pathway that proceeds via cadaverine, glutarate and L-2-hydroxyglutarate. Also displays some oxidase activity in vitro on L-2-hydroxyglutarate with O2 as the electron acceptor, but this activity is most likely not physiological. This chain is L-2-hydroxyglutarate dehydrogenase, found in Salmonella houtenae.